The chain runs to 351 residues: MSDKLAARERFLDVFEDLVEELKQILVSYNMPQEAIEWFVRSLNYNTPGGKLNRGLSVVDTFAILNNTTSDKLNDTEYKKVALLGWAIELLQAYFLVADDMMDQSKTRRGQPCWYLVEGVNNIAINDSFMLEGAIYILLKKHFRQDPYYVDLLDLFHEVTFQTELGQLLDLITADEEIVDLDKFSLEKHSFIVIFKTAYYSFYLPVALAMYMSGINDEKDLKQVRDILIPLGEYFQIQDDYLDCFGTPEQIGKIGTDIKDNKCSWVINQALLIATPEQRQLLDNNYGKKDDESEQKCKDLFKQLGIEKIYHDYEESIVAKLRKQIDQIDESRGLKKDVLTAFLGKVYKRSK.

The isopentenyl diphosphate site is built by K51, R54, and Q92. Residues D99 and D103 each contribute to the Mg(2+) site. R108 is a dimethylallyl diphosphate binding site. Isopentenyl diphosphate is bound at residue R109. K196, T197, Q236, K253, and K262 together coordinate dimethylallyl diphosphate.

Belongs to the FPP/GGPP synthase family. Requires Mg(2+) as cofactor.

It carries out the reaction isopentenyl diphosphate + dimethylallyl diphosphate = (2E)-geranyl diphosphate + diphosphate. The catalysed reaction is isopentenyl diphosphate + (2E)-geranyl diphosphate = (2E,6E)-farnesyl diphosphate + diphosphate. The protein operates within isoprenoid biosynthesis; farnesyl diphosphate biosynthesis; farnesyl diphosphate from geranyl diphosphate and isopentenyl diphosphate: step 1/1. It functions in the pathway isoprenoid biosynthesis; geranyl diphosphate biosynthesis; geranyl diphosphate from dimethylallyl diphosphate and isopentenyl diphosphate: step 1/1. In terms of biological role, farnesyl pyrophosphate synthase; part of the second module of ergosterol biosynthesis pathway that includes the middle steps of the pathway. ERG20 catalyzes the sequential condensation of isopentenyl pyrophosphate with dimethylallyl pyrophosphate, and then with the resultant geranylpyrophosphate to the ultimate product farnesyl pyrophosphate. The second module is carried out in the vacuole and involves the formation of farnesyl diphosphate, which is also an important intermediate in the biosynthesis of ubiquinone, dolichol, heme and prenylated proteins. Activity by the mevalonate kinase ERG12 first converts mevalonate into 5-phosphomevalonate. 5-phosphomevalonate is then further converted to 5-diphosphomevalonate by the phosphomevalonate kinase ERG8. The diphosphomevalonate decarboxylase MVD then produces isopentenyl diphosphate. The isopentenyl-diphosphate delta-isomerase IDI1 then catalyzes the 1,3-allylic rearrangement of the homoallylic substrate isopentenyl (IPP) to its highly electrophilic allylic isomer, dimethylallyl diphosphate (DMAPP). Finally the farnesyl diphosphate synthase ERG20 catalyzes the sequential condensation of isopentenyl pyrophosphate with dimethylallyl pyrophosphate, and then with the resultant geranylpyrophosphate to the ultimate product farnesyl pyrophosphate. This Candida albicans (strain SC5314 / ATCC MYA-2876) (Yeast) protein is Farnesyl pyrophosphate synthase.